A 659-amino-acid polypeptide reads, in one-letter code: Threonine--tRNA ligase (659 aa).

Residues 1-60 enclose the TGS domain; it reads MTVYLPDGKPLELPEGATAKDVARALGEGWERRAVGAIVDGELYDLLKPLPQGAKVRLLT. Residues 252–552 form a catalytic region; that stretch reads DHRRLGRELE…LIEHFAGDFP (301 aa). The Zn(2+) site is built by cysteine 349, histidine 400, and histidine 529.

This sequence belongs to the class-II aminoacyl-tRNA synthetase family. Homodimer. Zn(2+) is required as a cofactor.

It localises to the cytoplasm. It carries out the reaction tRNA(Thr) + L-threonine + ATP = L-threonyl-tRNA(Thr) + AMP + diphosphate + H(+). Catalyzes the attachment of threonine to tRNA(Thr) in a two-step reaction: L-threonine is first activated by ATP to form Thr-AMP and then transferred to the acceptor end of tRNA(Thr). Also edits incorrectly charged L-seryl-tRNA(Thr). The sequence is that of Threonine--tRNA ligase from Thermus thermophilus (strain ATCC BAA-163 / DSM 7039 / HB27).